The following is a 273-amino-acid chain: Putative phosphoenolpyruvate synthase regulatory protein (273 aa).

An ADP-binding site is contributed by 153–160; that stretch reads AVSRAGKT.

The protein belongs to the pyruvate, phosphate/water dikinase regulatory protein family. PSRP subfamily.

The enzyme catalyses [pyruvate, water dikinase] + ADP = [pyruvate, water dikinase]-phosphate + AMP + H(+). It carries out the reaction [pyruvate, water dikinase]-phosphate + phosphate + H(+) = [pyruvate, water dikinase] + diphosphate. In terms of biological role, bifunctional serine/threonine kinase and phosphorylase involved in the regulation of the phosphoenolpyruvate synthase (PEPS) by catalyzing its phosphorylation/dephosphorylation. This is Putative phosphoenolpyruvate synthase regulatory protein from Xanthomonas campestris pv. campestris (strain 8004).